Reading from the N-terminus, the 753-residue chain is MTILNHTLGFPRVGLRRELKKAQESYWAGNSTREELLTVGRELRARHWDQQKQAGIDLLPVGDFAWYDHVLTTSLLLGNVPPRHQNKDGSVDIDTLFRIGRGRAPTGEPAAAAEMTKWFNTNYHYMVPEFVKGQQFKLTWTQLLEEVDEALALGHNVKPVLLGPVTYLWLGKVKGEQFDRLSLLNDILPVYQQVLAELAKRGIEWVQIDEPALVLELPQAWLDAYKPAYDALQGQVKLLLTTYFEGVTPNLDTITALPVQGLHVDLVHGKDDVVELHKRLPSDWLLSAGLINGRNVWRADLTEKYAQIKDIVGKRDLWVASSCSLLHSPIDLSVETRLDAEVKSWFAFALQKCHELALLRDALNSGDTAALAEWSAPIQARRNSTRVHNPAVEKRLAAITAQDSQRANVYEVRAEAQRARFKLPAWPTTTIGSFPQTTEIRTLRLDFKKGNLDANNYRTGIAEHIRQAIVEQERLGLDVLVHGEAERNDMVEYFGEHLDGFVFTQNGWVQSYGSRCVKPPIVIGDVSRPAPITVEWAKYAQSLTDKPVKGMLTGPVTILCWSFPREDVSRETIAKQIALALRDEVADLEAAGIGIIQIDEPALREGLPLRRSDWDAYLQWGVEAFRINAAVAKDDTQIHTHMCYCEFNDIMDSIAALDADVITIETSRSDMELLESFEEFDYPNEIGPGVYDIHSPNVPSVEWIEALLKKAAKRIPAERLWVNPDCGLKTRGWPETRAALANMVQAAQNLRRG.

5-methyltetrahydropteroyltri-L-glutamate is bound by residues 17-20 and lysine 117; that span reads RELK. Residues 431-433 and glutamate 484 each bind L-homocysteine; that span reads IGS. L-methionine-binding positions include 431–433 and glutamate 484; that span reads IGS. Residues 515-516 and tryptophan 561 each bind 5-methyltetrahydropteroyltri-L-glutamate; that span reads RC. Aspartate 599 serves as a coordination point for L-homocysteine. Aspartate 599 lines the L-methionine pocket. A 5-methyltetrahydropteroyltri-L-glutamate-binding site is contributed by glutamate 605. Zn(2+) is bound by residues histidine 641, cysteine 643, and glutamate 665. The active-site Proton donor is the histidine 694. Cysteine 726 contributes to the Zn(2+) binding site.

Belongs to the vitamin-B12 independent methionine synthase family. Zn(2+) serves as cofactor.

It carries out the reaction 5-methyltetrahydropteroyltri-L-glutamate + L-homocysteine = tetrahydropteroyltri-L-glutamate + L-methionine. Its pathway is amino-acid biosynthesis; L-methionine biosynthesis via de novo pathway; L-methionine from L-homocysteine (MetE route): step 1/1. Its function is as follows. Catalyzes the transfer of a methyl group from 5-methyltetrahydrofolate to homocysteine resulting in methionine formation. The protein is 5-methyltetrahydropteroyltriglutamate--homocysteine methyltransferase of Escherichia coli (strain ATCC 8739 / DSM 1576 / NBRC 3972 / NCIMB 8545 / WDCM 00012 / Crooks).